The following is a 254-amino-acid chain: Chaperone protein PmfD (254 aa).

The signal sequence occupies residues 1–26 (MNSFSTLKTLFCGSLLALSLVNTTQA).

Belongs to the periplasmic pilus chaperone family.

Its subcellular location is the periplasm. Its function is as follows. Involved in the biogenesis of the PMF fimbria. The polypeptide is Chaperone protein PmfD (pmfD) (Proteus mirabilis (strain HI4320)).